A 380-amino-acid polypeptide reads, in one-letter code: MKKIILLGATGSIGTQTLAIIRENPEKFQVVALSFGRNMERGRAIIKEFKPKMVAVWHTRDRVTLEAEFPNVKFFNGLEGLREVATYLDGDVLLNAVMGSVGLLPTLDAIEAGKAIAIANKETLVTAGHLVMRAAKEKNISLLPVDSEHSAILQALNGENTERIEKIVLTASGGSFRDKTREQLSLVTVKEALKHPNWNMGNKLTIDSATMFNKGLEVMEAHWLFGVDYDDIEVVIQRESIIHSMVQFVDGSFIAQLGTPDMRMPIQYALTYPDRLYIPYEKEFRITDFSALHFEKVDYERFPALKLAYNAGKIGGTMPTVLNAANEIAVAGFLNGQVAFYNIEALVENAMNRHTSISDPDLDTILQVDQETRAYVKTLL.

Residues T10, G11, S12, I13, G36, R37, N38, and N120 each coordinate NADPH. Residue K121 coordinates 1-deoxy-D-xylulose 5-phosphate. Residue E122 participates in NADPH binding. D146 contacts Mn(2+). 1-deoxy-D-xylulose 5-phosphate is bound by residues S147, E148, S172, and H195. E148 is a binding site for Mn(2+). An NADPH-binding site is contributed by G201. Residues S208, N213, K214, and E217 each contribute to the 1-deoxy-D-xylulose 5-phosphate site. Position 217 (E217) interacts with Mn(2+).

This sequence belongs to the DXR family. Mg(2+) serves as cofactor. Mn(2+) is required as a cofactor.

The catalysed reaction is 2-C-methyl-D-erythritol 4-phosphate + NADP(+) = 1-deoxy-D-xylulose 5-phosphate + NADPH + H(+). It participates in isoprenoid biosynthesis; isopentenyl diphosphate biosynthesis via DXP pathway; isopentenyl diphosphate from 1-deoxy-D-xylulose 5-phosphate: step 1/6. In terms of biological role, catalyzes the NADPH-dependent rearrangement and reduction of 1-deoxy-D-xylulose-5-phosphate (DXP) to 2-C-methyl-D-erythritol 4-phosphate (MEP). This chain is 1-deoxy-D-xylulose 5-phosphate reductoisomerase, found in Listeria monocytogenes serotype 4a (strain HCC23).